Reading from the N-terminus, the 273-residue chain is Ribonuclease PH (273 aa).

Phosphate is bound by residues arginine 86 and 124–126 (GTR). Positions 254–273 (GHQEPGEGAGVSLAPGGGGL) are disordered.

The protein belongs to the RNase PH family. As to quaternary structure, homohexameric ring arranged as a trimer of dimers.

The catalysed reaction is tRNA(n+1) + phosphate = tRNA(n) + a ribonucleoside 5'-diphosphate. In terms of biological role, phosphorolytic 3'-5' exoribonuclease that plays an important role in tRNA 3'-end maturation. Removes nucleotide residues following the 3'-CCA terminus of tRNAs; can also add nucleotides to the ends of RNA molecules by using nucleoside diphosphates as substrates, but this may not be physiologically important. Probably plays a role in initiation of 16S rRNA degradation (leading to ribosome degradation) during starvation. This is Ribonuclease PH from Symbiobacterium thermophilum (strain DSM 24528 / JCM 14929 / IAM 14863 / T).